The sequence spans 486 residues: Cardiolipin synthase A (486 aa).

A run of 2 helical transmembrane segments spans residues 3 to 23 (TFYT…IAGV) and 38 to 58 (MAWL…YLSF). 2 PLD phosphodiesterase domains span residues 219-246 (MDLR…VDPR) and 399-426 (EGGL…DMRS). Active-site residues include His224, Lys226, Asp231, His404, Lys406, and Asp411.

It belongs to the phospholipase D family. Cardiolipin synthase subfamily. ClsA sub-subfamily.

It localises to the cell inner membrane. It catalyses the reaction 2 a 1,2-diacyl-sn-glycero-3-phospho-(1'-sn-glycerol) = a cardiolipin + glycerol. In terms of biological role, catalyzes the reversible phosphatidyl group transfer from one phosphatidylglycerol molecule to another to form cardiolipin (CL) (diphosphatidylglycerol) and glycerol. This Citrobacter koseri (strain ATCC BAA-895 / CDC 4225-83 / SGSC4696) protein is Cardiolipin synthase A.